Here is a 150-residue protein sequence, read N- to C-terminus: Propanediol utilization protein PduV (150 aa).

Residues Met-1–Asp-42 form a targets protein to the BMC region. Position 8–15 (Gly-8–Thr-15) interacts with GTP.

Belongs to the EutP/PduV family. As to quaternary structure, interacts with PduU, probably via the PduU beta-barrel which is predicted by modeling to be on the exterior of the BMC.

Its subcellular location is the bacterial microcompartment. Its pathway is polyol metabolism; 1,2-propanediol degradation. In terms of biological role, may play a role in the spatial distribution of the bacterial microcompartment (BMC) dedicated to 1,2-PD degradation, perhaps being involved in cytoskeleton dynamics; might bind GTP. This subunit is directly targeted to the BMC. Expression of a cosmid containing the full 21-gene pdu operon in E.coli allows E.coli to grow on 1,2-propanediol (1,2-PD) with the appearance of bacterial microcompartments (BMC) in its cytoplasm. Its function is as follows. The 1,2-PD-specific bacterial microcompartment (BMC) concentrates low levels of 1,2-PD catabolic enzymes, concentrates volatile reaction intermediates thus enhancing pathway flux and keeps the level of toxic, mutagenic propionaldehyde low. The polypeptide is Propanediol utilization protein PduV (Citrobacter freundii).